Consider the following 138-residue polypeptide: MALLPDKEKLLRNFLRCANWEEKYLYIIELGQRLPELRAEDGSPQNSIQGCQSQVWIVMRQNAQGIIELQGDSDAAIVKGLIAVVFILYDQMTPQDIVNFDVRPWFEKMALTQHLTPSRSQGLEAMIRAIRAKAAALS.

The active-site Cysteine persulfide intermediate is C51.

It belongs to the SufE family. Homodimer. Interacts with SufS.

It localises to the cytoplasm. It participates in cofactor biosynthesis; iron-sulfur cluster biosynthesis. Its function is as follows. Participates in cysteine desulfuration mediated by SufS. Cysteine desulfuration mobilizes sulfur from L-cysteine to yield L-alanine and constitutes an essential step in sulfur metabolism for biosynthesis of a variety of sulfur-containing biomolecules. Functions as a sulfur acceptor for SufS, by mediating the direct transfer of the sulfur atom from the S-sulfanylcysteine of SufS, an intermediate product of cysteine desulfuration process. This chain is Cysteine desulfuration protein SufE, found in Shigella flexneri serotype 5b (strain 8401).